A 144-amino-acid chain; its full sequence is Large ribosomal subunit protein uL11 (144 aa).

Belongs to the universal ribosomal protein uL11 family. In terms of assembly, part of the ribosomal stalk of the 50S ribosomal subunit. Interacts with L10 and the large rRNA to form the base of the stalk. L10 forms an elongated spine to which L12 dimers bind in a sequential fashion forming a multimeric L10(L12)X complex. One or more lysine residues are methylated.

Forms part of the ribosomal stalk which helps the ribosome interact with GTP-bound translation factors. The sequence is that of Large ribosomal subunit protein uL11 from Gluconobacter oxydans (strain 621H) (Gluconobacter suboxydans).